A 629-amino-acid chain; its full sequence is 1-deoxy-D-xylulose-5-phosphate synthase (629 aa).

Residues His-72 and 113 to 115 (GHA) contribute to the thiamine diphosphate site. Asp-144 provides a ligand contact to Mg(2+). Residues 145–146 (GA), Asn-174, Tyr-287, and Glu-370 contribute to the thiamine diphosphate site. Position 174 (Asn-174) interacts with Mg(2+).

Belongs to the transketolase family. DXPS subfamily. In terms of assembly, homodimer. Requires Mg(2+) as cofactor. Thiamine diphosphate is required as a cofactor.

The enzyme catalyses D-glyceraldehyde 3-phosphate + pyruvate + H(+) = 1-deoxy-D-xylulose 5-phosphate + CO2. It functions in the pathway metabolic intermediate biosynthesis; 1-deoxy-D-xylulose 5-phosphate biosynthesis; 1-deoxy-D-xylulose 5-phosphate from D-glyceraldehyde 3-phosphate and pyruvate: step 1/1. In terms of biological role, catalyzes the acyloin condensation reaction between C atoms 2 and 3 of pyruvate and glyceraldehyde 3-phosphate to yield 1-deoxy-D-xylulose-5-phosphate (DXP). In Prochlorococcus marinus (strain MIT 9301), this protein is 1-deoxy-D-xylulose-5-phosphate synthase.